The primary structure comprises 139 residues: MGSKIPLPQYETKGSAGLDLRACLDSNLSLQAGTSQLIPIGFAMYLEDPGLAAMVIPRSGLGSKHGIVLGNLVGLIDSDYQGELMVPAWNRSDTDFEINPGDRIAQMIIVPVIQADFEIVDEFNETQRGEKGFGSSGIN.

Substrate is bound by residues 58–60, asparagine 71, 75–77, and methionine 85; these read RSG and LID.

Belongs to the dUTPase family. It depends on Mg(2+) as a cofactor.

It catalyses the reaction dUTP + H2O = dUMP + diphosphate + H(+). It functions in the pathway pyrimidine metabolism; dUMP biosynthesis; dUMP from dCTP (dUTP route): step 2/2. Its function is as follows. This enzyme is involved in nucleotide metabolism: it produces dUMP, the immediate precursor of thymidine nucleotides and it decreases the intracellular concentration of dUTP so that uracil cannot be incorporated into DNA. This chain is Deoxyuridine 5'-triphosphate nucleotidohydrolase, found in Gamma-proteobacterium EBAC31A08.